The sequence spans 478 residues: MNFVIPSFIPAIPEIVLLTLTSLLLIADTIWSKRSEFATYYATQLILLVVGYLVLTSFSTSQVLTFDGSFVRDAFGDILKLVIVVVSMGIFLFSKEYLLQNKFYRGEYFTLGLFGVLGMFVMVSAYNLITMYLGLEIMSLALYAMVAMRKDNQHALEAAMKYFVLGALATGMLLYGFSMIYGATGSIQFDEMAQIIASGNVDNVVLSFGVVFIVIGLAFKLGAVPFHMWVPDVYHGAPTAVTLYIGTAPKIAAFAMLYRILVEGLPGLVEDWQSLIVMISVLSLIVGAVITLVQENLKRLLAYSGIGHIGFILLGIIAANPDGYSAAMFYTIVYSITALAGFGMIVALARTNNEFDLVADFKGMNKRNPWLALMMLFIMFSMAGIPPFVGFYAKVVVIEEVVQAGFTWLAVLAVVMAVISAFYYLRVVKVMYFDEPEDNTKIEPVSSQLNWAVSFVSIALLLLGLMPSSLITLCYNSL.

The next 13 helical transmembrane spans lie at 7 to 27 (SFIP…LLIA), 46 to 66 (ILLV…VLTF), 74 to 94 (AFGD…FLFS), 109 to 129 (FTLG…YNLI), 163 to 183 (FVLG…IYGA), 204 to 224 (VVLS…LGAV), 237 to 257 (APTA…FAML), 273 to 293 (QSLI…ITLV), 300 to 320 (LLAY…IAAN), 328 to 348 (MFYT…IVAL), 371 to 391 (LALM…FVGF), 405 to 425 (GFTW…FYYL), and 451 to 471 (WAVS…SSLI).

The protein belongs to the complex I subunit 2 family. NDH-1 is composed of 14 different subunits. Subunits NuoA, H, J, K, L, M, N constitute the membrane sector of the complex.

The protein resides in the cell inner membrane. It catalyses the reaction a quinone + NADH + 5 H(+)(in) = a quinol + NAD(+) + 4 H(+)(out). In terms of biological role, NDH-1 shuttles electrons from NADH, via FMN and iron-sulfur (Fe-S) centers, to quinones in the respiratory chain. The immediate electron acceptor for the enzyme in this species is believed to be ubiquinone. Couples the redox reaction to proton translocation (for every two electrons transferred, four hydrogen ions are translocated across the cytoplasmic membrane), and thus conserves the redox energy in a proton gradient. In Hydrogenovibrio crunogenus (strain DSM 25203 / XCL-2) (Thiomicrospira crunogena), this protein is NADH-quinone oxidoreductase subunit N.